The following is a 307-amino-acid chain: MISAKMVKDLREKTGAGMMDCKKALTECDGDLEKAVEVLREKGLAAAAKKSGRVAAEGIVSTYISEDMKNGSIVEFNCETDFVSVNELFVELANNLSKQAAFSNVSTAEELLEEKYIADESKLVKDVITELIAKLGENMNLRRIAKLSVDKGVITSYIHGGGRIGVLVKLACEKEDAKLAEIAKDVAMQVAATNPLFLNRDGVDTDTLEKEKEIYRVQALNEGKPEKVVEKMVMGRINKYYKENCLVEQLWVKNGDYTITKYLQEQSKEIGADITVEAFVRYEKGEGIEKKEEDFAEEVQRQMNQGK.

Residues 80–83 (TDFV) are involved in Mg(2+) ion dislocation from EF-Tu.

This sequence belongs to the EF-Ts family.

It localises to the cytoplasm. In terms of biological role, associates with the EF-Tu.GDP complex and induces the exchange of GDP to GTP. It remains bound to the aminoacyl-tRNA.EF-Tu.GTP complex up to the GTP hydrolysis stage on the ribosome. The polypeptide is Elongation factor Ts (Clostridium botulinum (strain Kyoto / Type A2)).